The primary structure comprises 34 residues: Brevinin-2Ec (34 aa).

Cysteines 28 and 34 form a disulfide.

It belongs to the frog skin active peptide (FSAP) family. Brevinin subfamily. As to expression, expressed by the skin glands.

The protein resides in the secreted. Its function is as follows. Shows antibacterial activity against representative Gram-negative and Gram-positive bacterial species, and hemolytic activity. The sequence is that of Brevinin-2Ec from Pelophylax lessonae (Pool frog).